The sequence spans 142 residues: Acidic phospholipase A2 KBf-grIB (142 aa).

Disulfide bonds link Cys-28-Cys-94, Cys-44-Cys-141, Cys-46-Cys-62, Cys-61-Cys-122, Cys-68-Cys-115, Cys-78-Cys-108, and Cys-101-Cys-113. Residues Tyr-45, Gly-47, and Gly-49 each contribute to the Ca(2+) site. Residue His-65 is part of the active site. A Ca(2+)-binding site is contributed by Asp-66. The active site involves Asp-116.

The protein belongs to the phospholipase A2 family. Group I subfamily. D49 sub-subfamily. The cofactor is Ca(2+). Expressed by the venom gland.

It localises to the secreted. It carries out the reaction a 1,2-diacyl-sn-glycero-3-phosphocholine + H2O = a 1-acyl-sn-glycero-3-phosphocholine + a fatty acid + H(+). In terms of biological role, PLA2 catalyzes the calcium-dependent hydrolysis of the 2-acyl groups in 3-sn-phosphoglycerides. This Bungarus fasciatus (Banded krait) protein is Acidic phospholipase A2 KBf-grIB.